Here is a 404-residue protein sequence, read N- to C-terminus: Argininosuccinate synthase (404 aa).

9–17 (AYSGGLDTS) contacts ATP. Tyr86 contributes to the L-citrulline binding site. Gly116 is an ATP binding site. Positions 118, 122, and 123 each coordinate L-aspartate. Asn122 serves as a coordination point for L-citrulline. L-citrulline is bound by residues Arg126, Ser174, Ser183, Glu259, and Tyr271.

The protein belongs to the argininosuccinate synthase family. Type 1 subfamily. In terms of assembly, homotetramer.

It is found in the cytoplasm. It catalyses the reaction L-citrulline + L-aspartate + ATP = 2-(N(omega)-L-arginino)succinate + AMP + diphosphate + H(+). Its pathway is amino-acid biosynthesis; L-arginine biosynthesis; L-arginine from L-ornithine and carbamoyl phosphate: step 2/3. This chain is Argininosuccinate synthase, found in Listeria innocua serovar 6a (strain ATCC BAA-680 / CLIP 11262).